Here is a 512-residue protein sequence, read N- to C-terminus: Cytochrome P450 monooxygenase 208 (512 aa).

The helical transmembrane segment at 4–24 (LFLVLDTGAAVLLVALLFVVY) threads the bilayer. Cys-438 is a heme binding site.

The protein belongs to the cytochrome P450 family. It depends on heme as a cofactor.

It is found in the membrane. It participates in secondary metabolite biosynthesis. Cytochrome P450 monooxygenase that is able to use 7-ethoxycoumarin as a substrate for oxidation. This chain is Cytochrome P450 monooxygenase 208, found in Postia placenta (strain ATCC 44394 / Madison 698-R) (Brown rot fungus).